We begin with the raw amino-acid sequence, 214 residues long: N-(5'-phosphoribosyl)anthranilate isomerase (214 aa).

Belongs to the TrpF family.

The enzyme catalyses N-(5-phospho-beta-D-ribosyl)anthranilate = 1-(2-carboxyphenylamino)-1-deoxy-D-ribulose 5-phosphate. Its pathway is amino-acid biosynthesis; L-tryptophan biosynthesis; L-tryptophan from chorismate: step 3/5. This is N-(5'-phosphoribosyl)anthranilate isomerase from Haloarcula marismortui (strain ATCC 43049 / DSM 3752 / JCM 8966 / VKM B-1809) (Halobacterium marismortui).